Reading from the N-terminus, the 346-residue chain is L-glyceraldehyde 3-phosphate reductase (346 aa).

NADP(+) is bound by residues W33, D61, Y66, S168, Q193, T223, L225, Q227, K233, S303, Q307, and N311.

The protein belongs to the shaker potassium channel beta subunit family. As to quaternary structure, homotetramer. Homooctamer.

The catalysed reaction is a primary alcohol + NADP(+) = an aldehyde + NADPH + H(+). The enzyme catalyses hydroxyacetone + NADP(+) = methylglyoxal + NADPH + H(+). Functionally, aldo-keto reductase that catalyzes the stereospecific, NADPH-dependent reduction of L-glyceraldehyde 3-phosphate (L-GAP) to L-glycerol 3-phosphate (L-G3P). The physiological role of Gpr is the detoxification of L-GAP, which may be formed via non-enzymatic and/or enzymatic racemization of D-GAP. Also contributes to cellular methylglyoxal detoxification by catalyzing the NADPH-dependent conversion of methylglyoxal to acetol. However, the catalytic efficiency of methylglyoxal reductase activity is more than 2 orders of magnitude lower than the L-GAP reductase activity. In addition, exhibits activity with glyoxal and probably plays a significant role in detoxification of glyoxal in vivo. Shows broad specificity and can use aromatic aldehydes such as 4-nitrobenzaldehyde and benzaldehyde, D,L-glyceraldehyde, phenylglyoxal, isatin and the model substrate 4-nitrobenzaldehyde. The chain is L-glyceraldehyde 3-phosphate reductase from Escherichia coli (strain K12).